The chain runs to 398 residues: Cytohesin-1 (398 aa).

Met1 is modified (N-acetylmethionine). The segment at 1–60 is necessary for localization at adherens junction; that stretch reads MEDDDSYVPSDLTAEERQELENIRRRKQELLADIQRLKEEIAEVANEIESLGSTEERKNM. Residues 10–67 adopt a coiled-coil conformation; sequence SDLTAEERQELENIRRRKQELLADIQRLKEEIAEVANEIESLGSTEERKNMQRNKQVA. The SEC7 domain maps to 73–202; the sequence is FNMDPKKGIQ…IIMLNTSLHN (130 aa). One can recognise a PH domain in the interval 260-377; it reads NPDREGWLLK…WIKCIKAAIS (118 aa). Residues 269–277, Arg281, Tyr292, Arg302, and Asn351 contribute to the a 1,2-diacyl-sn-glycero-3-phospho-(1D-myo-inositol-3,4,5-trisphosphate) site; that span reads KLGGGRVKT. Positions 388-396 are C-terminal autoinhibitory region; it reads RKKKVSSTK.

In terms of assembly, interacts with TRIM23 and CYTIP. Interacts (via coiled-coil domain) with FRMD4A (via coiled-coil domain). Interacts with FRMD4B. Found in a complex with PARD3, CYTH1 and FRMD4A. Interacts (via N-terminal domain) with INAVA (via N-terminal domain). Ubiquitinated by SCF(FBXW11) E3 ubiquitin-protein ligase complex. Ubiquitination induces proteasomal degradation. Expressed in colon and small intestine (at protein level).

Its subcellular location is the cell membrane. It localises to the cytoplasm. The protein localises to the cytosol. The protein resides in the cell junction. It is found in the tight junction. Its subcellular location is the adherens junction. Its function is as follows. Promotes guanine-nucleotide exchange on ARF1, ARF5 and ARF6. Promotes the activation of ARF factors through replacement of GDP with GTP. Plays an important role in membrane trafficking, during junctional remodeling and epithelial polarization, through regulation of ARF6 activity. In Mus musculus (Mouse), this protein is Cytohesin-1 (Cyth1).